The sequence spans 470 residues: Zinc finger protein pat-9 (470 aa).

Residues 1 to 25 form a disordered region; the sequence is MENRTPMQHHSGYEIVKSEPPSTPK. 3 C2H2-type zinc fingers span residues 84–106, 112–134, and 140–162; these read YPCNLCSSKFGSKMELEEHQNSH, FECDTCNARFNRRSTLWNHKRIH, and FVCTVCQMTFKWKNSLKCHKDMH. Residues 191 to 235 form a disordered region; sequence MEQEENGGLPASSSASSVISHPLITTTSGNKKRSKAAKAKQTPSS. The Nuclear localization signal motif lies at 221-230; that stretch reads KKRSKAAKAK.

It belongs to the krueppel C2H2-type zinc-finger protein family. In terms of tissue distribution, expressed in body wall muscle and gonad (at protein level).

The protein resides in the nucleus. It is found in the chromosome. Functionally, probable transcription factor; required for proper organization of muscle myofilaments and for their recruitment to the M line. This Caenorhabditis elegans protein is Zinc finger protein pat-9.